We begin with the raw amino-acid sequence, 139 residues long: Putative nickel-responsive regulator (139 aa).

His79, His90, His92, and Cys98 together coordinate Ni(2+).

The protein belongs to the transcriptional regulatory CopG/NikR family. It depends on Ni(2+) as a cofactor.

Transcriptional regulator. This chain is Putative nickel-responsive regulator, found in Anaeromyxobacter dehalogenans (strain 2CP-1 / ATCC BAA-258).